Reading from the N-terminus, the 199-residue chain is MSFIREILRAIRITLIFWLVTAIIYPLAILVVGQGLFPIQANGSIMENIEGTPIGSTLISQVFTSEKYFHSRPSAVRYSQGRKAKPTGISGGSNLAPSNPALLERIIEEANQLRDENVQPIADLIYSSGSGLDPHISVQAARQQLERVARARGVQPDEILLAINKFTDGRFLGIFGEPGVNVLRLNYALDLQDINRQQN.

A helical membrane pass occupies residues 13–33 (ITLIFWLVTAIIYPLAILVVG).

This sequence belongs to the KdpC family. The system is composed of three essential subunits: KdpA, KdpB and KdpC.

The protein localises to the cell inner membrane. Its function is as follows. Part of the high-affinity ATP-driven potassium transport (or Kdp) system, which catalyzes the hydrolysis of ATP coupled with the electrogenic transport of potassium into the cytoplasm. This subunit acts as a catalytic chaperone that increases the ATP-binding affinity of the ATP-hydrolyzing subunit KdpB by the formation of a transient KdpB/KdpC/ATP ternary complex. This chain is Potassium-transporting ATPase KdpC subunit 2, found in Nostoc sp. (strain PCC 7120 / SAG 25.82 / UTEX 2576).